Consider the following 332-residue polypeptide: Ferredoxin--NADP reductase 2 (332 aa).

Residues Asp-33, Gln-41, Tyr-46, Val-86, Ile-121, Asp-282, and Ser-325 each coordinate FAD.

This sequence belongs to the ferredoxin--NADP reductase type 2 family. As to quaternary structure, homodimer. It depends on FAD as a cofactor.

The enzyme catalyses 2 reduced [2Fe-2S]-[ferredoxin] + NADP(+) + H(+) = 2 oxidized [2Fe-2S]-[ferredoxin] + NADPH. This Sulfolobus acidocaldarius (strain ATCC 33909 / DSM 639 / JCM 8929 / NBRC 15157 / NCIMB 11770) protein is Ferredoxin--NADP reductase 2.